Here is a 281-residue protein sequence, read N- to C-terminus: Very-long-chain (3R)-3-hydroxyacyl-CoA dehydratase 1 (281 aa).

Over 1 to 68 the chain is Cytoplasmic; that stretch reads MGKGDWRQGR…RRLGLLATAW (68 aa). The helical transmembrane segment at 69–88 threads the bilayer; the sequence is LTFYNIAMTAGWLVLAIAMV. Topologically, residues 89 to 107 are lumenal; it reads RFYMEKGTHRGLYKSIQKT. A helical transmembrane segment spans residues 108 to 124; the sequence is LKFFQTFALLEVVHCLI. Over 125–134 the chain is Cytoplasmic; it reads GIVPTSVLVT. The chain crosses the membrane as a helical span at residues 135 to 152; that stretch reads GVQVSSRIFMVWLITHSI. The Lumenal portion of the chain corresponds to 153 to 158; that stretch reads KPIQNE. A helical transmembrane segment spans residues 159 to 173; sequence ESVVLFLVSWTVTEI. The Cytoplasmic portion of the chain corresponds to 174–196; sequence TRYSFYTFSLLDHLPHFIKWARY. The chain crosses the membrane as a helical span at residues 197–214; the sequence is NLFIILYPVGVAGELLTI. Active-site residues include Tyr203 and Glu210. The Lumenal segment spans residues 215-244; the sequence is YAALPYVKKSGMFSVRLPNKYNVSFDYYYF. Asn236 carries an N-linked (GlcNAc...) asparagine glycan. A helical membrane pass occupies residues 245–262; sequence LLITMASYIPLFPQLYFH. At 263–281 the chain is on the cytoplasmic side; sequence MLRQRRKVLHGEVIAEKDD.

It belongs to the very long-chain fatty acids dehydratase HACD family. May interact with enzymes of the ELO family (including ELOVL1); with those enzymes that mediate condensation, the first of the four steps of the reaction cycle responsible for fatty acids elongation, may be part of a larger fatty acids elongase complex. Interacts with TECR. Post-translationally, N-glycosylated. In terms of tissue distribution, expressed at high levels in heart, skeletal muscle and testis, weak expression in kidney and liver.

It localises to the endoplasmic reticulum membrane. It carries out the reaction a very-long-chain (3R)-3-hydroxyacyl-CoA = a very-long-chain (2E)-enoyl-CoA + H2O. The enzyme catalyses (3R)-hydroxyhexadecanoyl-CoA = (2E)-hexadecenoyl-CoA + H2O. The catalysed reaction is (3R)-hydroxyoctadecanoyl-CoA = (2E)-octadecenoyl-CoA + H2O. It catalyses the reaction (3R)-hydroxyeicosanoyl-CoA = (2E)-eicosenoyl-CoA + H2O. It carries out the reaction (3R)-hydroxydocosanoyl-CoA = (2E)-docosenoyl-CoA + H2O. The enzyme catalyses (3R)-hydroxytetracosanoyl-CoA = (2E)-tetracosenoyl-CoA + H2O. The catalysed reaction is (3R)-hydroxyhexacosanoyl-CoA = (2E)-hexacosenoyl-CoA + H2O. Its pathway is lipid metabolism; fatty acid biosynthesis. The sequence is that of Very-long-chain (3R)-3-hydroxyacyl-CoA dehydratase 1 from Mus musculus (Mouse).